Reading from the N-terminus, the 323-residue chain is Elongation factor P--(R)-beta-lysine ligase (323 aa).

76–78 (SPE) is a binding site for substrate. ATP contacts are provided by residues 100-102 (RNE) and Asn-109. Tyr-118 is a binding site for substrate. Position 242–243 (242–243 (EL)) interacts with ATP. Glu-249 is a binding site for substrate. Gly-298 is an ATP binding site.

This sequence belongs to the class-II aminoacyl-tRNA synthetase family. EpmA subfamily. Homodimer.

It carries out the reaction D-beta-lysine + L-lysyl-[protein] + ATP = N(6)-((3R)-3,6-diaminohexanoyl)-L-lysyl-[protein] + AMP + diphosphate + H(+). Functionally, with EpmB is involved in the beta-lysylation step of the post-translational modification of translation elongation factor P (EF-P). Catalyzes the ATP-dependent activation of (R)-beta-lysine produced by EpmB, forming a lysyl-adenylate, from which the beta-lysyl moiety is then transferred to the epsilon-amino group of a conserved specific lysine residue in EF-P. This Actinobacillus succinogenes (strain ATCC 55618 / DSM 22257 / CCUG 43843 / 130Z) protein is Elongation factor P--(R)-beta-lysine ligase.